The sequence spans 480 residues: Peptidase S41 family protein ustP (480 aa).

The tract at residues 78 to 97 (CMPNKKSRPPDPRPSLAVGK) is disordered. The interval 134–336 (DVAVLQLPTF…LKQQGVRSIV (203 aa)) is peptidase S41 domain.

It belongs to the peptidase S41A family.

It functions in the pathway mycotoxin biosynthesis. Functionally, peptidase S41 family protein; part of the gene cluster that mediates the biosynthesis of the secondary metabolite ustiloxin B, an antimitotic tetrapeptide. First, ustA is processed by the subtilisin-like endoprotease Kex2 that is outside the ustiloxin B gene cluster, at the C-terminal side of Arg-Lys, after transfer to Golgi apparatus through the endoplasmic reticulum (ER). Cleavage by KEX2 generates 16 peptides YAIG-I to YAIG-XVI. To process the precursor peptide further, at least two peptidases are necessary to cleave the N-terminal and C-terminal sides of the Tyr-Ala-Ile-Gly core peptide which serves as backbone for the synthesis of ustiloxin B, through cyclization and modification of the tyrosine with a non-protein coding amino acid, norvaline. One of the two peptidases must be the serine peptidase ustP; and the other pepdidase is probably ustH. Macrocyclization of the core peptide derived from ustA requires the tyrosinase ustQ, as well as the homologous oxidases ustYa and ustYb, and leads to the production of the first cyclization product N-desmethylustiloxin F. For the formation of N-desmethylustiloxin F, three oxidation steps are required, hydroxylation at the benzylic position, hydroxylation at either the aromatic ring of Tyr or beta-position of Ile, and oxidative cyclization. UstQ may catalyze the oxidation of a phenol moiety, whereas the ustYa and ustYb are most likely responsible for the remaining two-step oxidations. N-desmethylustiloxin F is then methylated by ustM to yield ustiloxin F which in turn substrate of the cytochrome P450 monooxygenase ustC which catalyzes the formation of S-deoxyustiloxin H. The flavoprotein monooxygenases ustF1 and ustF2 then participate in the modification of the side chain of S-deoxyustiloxin H, leading to the synthesis of an oxime intermediate, via ustiloxin H. Finally, carboxylative dehydration performed by the cysteine desulfurase-like protein ustD yields ustiloxin B. This is Peptidase S41 family protein ustP from Aspergillus flavus (strain ATCC 200026 / FGSC A1120 / IAM 13836 / NRRL 3357 / JCM 12722 / SRRC 167).